A 212-amino-acid chain; its full sequence is Thymidylate kinase (212 aa).

10-17 (GPDGSGKS) is an ATP binding site.

The protein belongs to the thymidylate kinase family.

The catalysed reaction is dTMP + ATP = dTDP + ADP. Functionally, phosphorylation of dTMP to form dTDP in both de novo and salvage pathways of dTTP synthesis. This is Thymidylate kinase from Exiguobacterium sp. (strain ATCC BAA-1283 / AT1b).